The chain runs to 145 residues: YIDAETMHLHHDKHHQAYVNNANAALEKHPEIGEDLEALLADVESIPADIRQALINNGGGHLNHALFWELMTPEKTAPSAELAAAIDATFGSFEEFQAAFTAAATTRFGSGWAWLVVNKEGKLEVTSTANQDTPISEGKKPILGL.

Residues His10 and His64 each coordinate Fe(3+). Mn(2+) contacts are provided by His10 and His64. The tract at residues 126–145 (TSTANQDTPISEGKKPILGL) is disordered.

Belongs to the iron/manganese superoxide dismutase family. Mn(2+) is required as a cofactor. It depends on Fe(3+) as a cofactor.

It carries out the reaction 2 superoxide + 2 H(+) = H2O2 + O2. Functionally, destroys superoxide anion radicals which are normally produced within the cells and which are toxic to biological systems. Catalyzes the dismutation of superoxide anion radicals into O2 and H2O2 by successive reduction and oxidation of the transition metal ion at the active site. The protein is Superoxide dismutase [Mn/Fe] (sodA) of Streptococcus oralis.